A 322-amino-acid chain; its full sequence is HPr kinase/phosphorylase (322 aa).

Active-site residues include H146 and K167. 161-168 contacts ATP; sequence GDSGLGKS. A Mg(2+)-binding site is contributed by S168. D185 acts as the Proton acceptor; for phosphorylation activity. Proton donor; for dephosphorylation activity in catalysis. Residues 209-218 form an important for the catalytic mechanism of both phosphorylation and dephosphorylation region; that stretch reads LEVRGLGLLD. Position 210 (E210) interacts with Mg(2+). R250 is an active-site residue. The tract at residues 271 to 276 is important for the catalytic mechanism of dephosphorylation; it reads QVAAGR.

Belongs to the HPrK/P family. In terms of assembly, homohexamer. It depends on Mg(2+) as a cofactor.

It catalyses the reaction [HPr protein]-L-serine + ATP = [HPr protein]-O-phospho-L-serine + ADP + H(+). It carries out the reaction [HPr protein]-O-phospho-L-serine + phosphate + H(+) = [HPr protein]-L-serine + diphosphate. Catalyzes the ATP- as well as the pyrophosphate-dependent phosphorylation of a specific serine residue in HPr, a phosphocarrier protein of the phosphoenolpyruvate-dependent sugar phosphotransferase system (PTS). HprK/P also catalyzes the pyrophosphate-producing, inorganic phosphate-dependent dephosphorylation (phosphorolysis) of seryl-phosphorylated HPr (P-Ser-HPr). This is HPr kinase/phosphorylase from Paraburkholderia phymatum (strain DSM 17167 / CIP 108236 / LMG 21445 / STM815) (Burkholderia phymatum).